Consider the following 330-residue polypeptide: Fructose-1,6-bisphosphatase class 1 (330 aa).

Mg(2+) contacts are provided by Glu-84, Asp-103, Leu-105, and Asp-106. Substrate contacts are provided by residues 106 to 109, Asn-196, and Lys-262; that span reads DGSS. Glu-268 provides a ligand contact to Mg(2+).

It belongs to the FBPase class 1 family. In terms of assembly, homotetramer. The cofactor is Mg(2+).

It is found in the cytoplasm. The catalysed reaction is beta-D-fructose 1,6-bisphosphate + H2O = beta-D-fructose 6-phosphate + phosphate. It functions in the pathway carbohydrate biosynthesis; gluconeogenesis. The polypeptide is Fructose-1,6-bisphosphatase class 1 (Shewanella baltica (strain OS185)).